The following is a 384-amino-acid chain: Probable splicing factor YJU2B (384 aa).

The disordered stretch occupies residues 1–28 (MGERKGTNKYYPPDFDPAKHGSLNGYRN). Positions 183 to 212 (NSLLRSKFREEKKQIKEEEERDQALLTKAS) form a coiled coil. Positions 275–331 (GIRTKTPSVPGISPVSLGVVRRTSKEENKAEDKSVESPDGSRSRKAEGMCRKEETGC) are disordered. Positions 297-331 (TSKEENKAEDKSVESPDGSRSRKAEGMCRKEETGC) are enriched in basic and acidic residues.

This sequence belongs to the CWC16 family.

The protein resides in the nucleus. In terms of biological role, may be involved in mRNA splicing. The protein is Probable splicing factor YJU2B (yju2b) of Xenopus laevis (African clawed frog).